Consider the following 368-residue polypeptide: Agmatine deiminase (368 aa).

Catalysis depends on cysteine 357, which acts as the Amidino-cysteine intermediate.

This sequence belongs to the agmatine deiminase family. In terms of assembly, homodimer.

The catalysed reaction is agmatine + H2O = N-carbamoylputrescine + NH4(+). Its pathway is amine and polyamine biosynthesis; putrescine biosynthesis via agmatine pathway; N-carbamoylputrescine from agmatine: step 1/1. Its function is as follows. Mediates the hydrolysis of agmatine into N-carbamoylputrescine in the arginine decarboxylase (ADC) pathway of putrescine biosynthesis, a basic polyamine. In Pseudomonas fluorescens (strain SBW25), this protein is Agmatine deiminase.